The primary structure comprises 160 residues: Ribosomal RNA large subunit methyltransferase H (160 aa).

S-adenosyl-L-methionine-binding residues include L76 and G108.

The protein belongs to the RNA methyltransferase RlmH family. As to quaternary structure, homodimer.

The protein resides in the cytoplasm. It carries out the reaction pseudouridine(1915) in 23S rRNA + S-adenosyl-L-methionine = N(3)-methylpseudouridine(1915) in 23S rRNA + S-adenosyl-L-homocysteine + H(+). Functionally, specifically methylates the pseudouridine at position 1915 (m3Psi1915) in 23S rRNA. In Nitrobacter hamburgensis (strain DSM 10229 / NCIMB 13809 / X14), this protein is Ribosomal RNA large subunit methyltransferase H.